Here is a 191-residue protein sequence, read N- to C-terminus: Calcium and integrin-binding protein 1 (191 aa).

A lipid anchor (N-myristoyl glycine) is attached at Gly-2. 2 EF-hand domains span residues 103-138 and 148-183; these read TPDIKSHYAFRIFDFDDDGTLNREDLSRLVNCLTGE and EMKQLIDNILEESDIDRDGTINLSEFQHVISRSPDF. Residues Asp-116, Asp-118, Asp-120, Thr-122, Asp-127, Asp-161, Asp-163, Asp-165, Thr-167, and Glu-172 each contribute to the Ca(2+) site. Asp-118 is modified (phosphoserine).

In terms of assembly, monomer. Interacts with MYO1C. Interacts (via C-terminal region) with PPP3R1 and CACNA1C; the interactions increase upon cardiomyocytes hypertrophy. Interacts with the heterodimeric integrin alpha-IIb/beta3 (ITGA2B-ITGB3). Interacts with ITGA2B (via cytoplasmic domain); the interaction is direct and calcium-dependent. Interacts with the protein kinases PLK2/SNK and PRKDC (via the region immediately upstream of the kinase domain). Interacts with PLK3; the interaction inhibits PLK3 kinase activity. Interacts with PSEN2. Interacts (via C-terminus) with F8. Interacts with NBR1 (via C-terminus). Interacts with FEZ1 (via C-terminus). Interacts with UBR5 (via C-terminus); the interaction is sensitive to DNA damage, and may target CIB1 for ubiquitin-mediated degradation. Interacts with IFI6; the interaction is direct. Interacts with BCL2. Interacts with ITPR3; the interaction occurs in a calcium-dependent manner. Interacts with PTK2/FAK1. Interacts with MAP3K5; the interaction inhibits MAP3K5 activation by phosphorylation, and its subsequent interaction with TRAF2. Isoform 2 interacts with PRKD2 (via N-terminal AP-rich region), PTK2/FAK1 and PAK1. Interacts with TAS1R2 (via C-terminus); the interaction is independent of the myristoylation state of CIB1. Interacts (via C-terminal region) with STMN2 (via the N-terminal region); the interaction is direct, occurs in a calcium-dependent manner and attenuates the STMN2-induced neurite outgrowth inhibition. Interacts with SPHK1, the interaction occurs in a calcium-dependent manner. Interacts with ITGA2B (via C-terminal cytoplasmic tail); the interaction occurs upon platelet aggregation and is stabilized/increased in a calcium and magnesium-dependent manner. Interacts with PAK1 (via N-terminal region); the interaction is direct and occurs in a calcium-dependent manner. Interacts with RAC3 (via C-terminal region); the interaction induces their association with the cytoskeleton upon alpha-IIb/beta3 integrin-mediated adhesion. Interacts with ITGA5 and ITGAV. Interacts and forms a complex with TMC6 and TMC8; the interaction stabilizes each component of the complex. (Microbial infection) Interacts with human papillomavirus 4/HPV4 protein E8, human papillomavirus 5/HPV5 protein E1, and human papillomavirus 16/HPV16 proteins E2 and E5. In terms of processing, phosphorylation of isoform 2 at Ser-118 by PRKD2 increases its ability to stimulate tumor angiogenesis. As to expression, ubiquitously expressed. Expressed in the epidermis, hair follicles and keratinocytes. Detected in platelets and in cell lines of megakaryocytic and erythrocytic lineages. Both isoform 1 and isoform 2 are detected in various cancer cell lines, with isoform 2 being the predominant form (at protein level).

It is found in the membrane. The protein localises to the cell membrane. The protein resides in the sarcolemma. Its subcellular location is the apical cell membrane. It localises to the cell projection. It is found in the ruffle membrane. The protein localises to the filopodium tip. The protein resides in the growth cone. Its subcellular location is the lamellipodium. It localises to the cytoplasm. It is found in the cytoskeleton. The protein localises to the microtubule organizing center. The protein resides in the centrosome. Its subcellular location is the perinuclear region. It localises to the nucleus. It is found in the neuron projection. The protein localises to the perikaryon. The protein resides in the golgi apparatus. Its subcellular location is the trans-Golgi network. Its function is as follows. Calcium-binding protein that plays a role in the regulation of numerous cellular processes, such as cell differentiation, cell division, cell proliferation, cell migration, thrombosis, angiogenesis, cardiac hypertrophy and apoptosis. Involved in bone marrow megakaryocyte differentiation by negatively regulating thrombopoietin-mediated signaling pathway. Participates in the endomitotic cell cycle of megakaryocyte, a form of mitosis in which both karyokinesis and cytokinesis are interrupted. Plays a role in integrin signaling by negatively regulating alpha-IIb/beta3 activation in thrombin-stimulated megakaryocytes preventing platelet aggregation. Up-regulates PTK2/FAK1 activity, and is also needed for the recruitment of PTK2/FAK1 to focal adhesions; it thus appears to play an important role in focal adhesion formation. Positively regulates cell migration on fibronectin in a CDC42-dependent manner, the effect being negatively regulated by PAK1. Functions as a negative regulator of stress activated MAP kinase (MAPK) signaling pathways. Down-regulates inositol 1,4,5-trisphosphate receptor-dependent calcium signaling. Involved in sphingosine kinase SPHK1 translocation to the plasma membrane in a N-myristoylation-dependent manner preventing TNF-alpha-induced apoptosis. Regulates serine/threonine-protein kinase PLK3 activity for proper completion of cell division progression. Plays a role in microtubule (MT) dynamics during neuronal development; disrupts the MT depolymerization activity of STMN2 attenuating NGF-induced neurite outgrowth and the MT reorganization at the edge of lamellipodia. Promotes cardiomyocyte hypertrophy via activation of the calcineurin/NFAT signaling pathway. Stimulates calcineurin PPP3R1 activity by mediating its anchoring to the sarcolemma. In ischemia-induced (pathological or adaptive) angiogenesis, stimulates endothelial cell proliferation, migration and microvessel formation by activating the PAK1 and ERK1/ERK2 signaling pathway. Also promotes cancer cell survival and proliferation. May regulate cell cycle and differentiation of spermatogenic germ cells, and/or differentiation of supporting Sertoli cells. Forms a complex with TMC6/EVER1 and TMC8/EVER2 in lymphocytes and keratynocytes where CIB1 stabilizes TMC6 and TMC8 levels and reciprocally. Functionally, acts as a restriction factor that promotes keratinocyte-intrinsic immunity to human beta-papillomaviruses (HPVs). In terms of biological role, plays a regulatory role in angiogenesis and tumor growth by mediating PKD/PRKD2-induced vascular endothelial growth factor A (VEGFA) secretion. This chain is Calcium and integrin-binding protein 1 (CIB1), found in Homo sapiens (Human).